The sequence spans 425 residues: MASSNLIKQLQERGLIAQVTDEEALAERLAQGPIALYCGFDPTADSLHLGHLVPLLCLKRFQLSGHKPVALVGGATGLIGDPSFKATERKLNTSETVGEWVEKIRRQVSPFLDFDCGKNSAIAANNYDWFGNMNVLDFLRDIGKHFSVNQMISKEAVKQRLNRDDVGISFTEFSYNLLQGYDFASLNKQHDVELQIGGSDQWGNITSGIDLTRRMNQKQVYGLTVPLITKSDGTKFGKTEGGAIWLDASKTSPYKFYQFWINTADADVYRFLKFFTFMSLENIDALEEEDKNSGKAPRAQYVLAEDVTRMVHGEAGLEAARRITQSLFSGALQDMTQDDFAQLAQDGMPIIELENSADLQQALVSAELVPSRGQARTMISSNAVTINGEKQANPEYIFSASDRLFDRYTLLRRGKKHYCLICWKA.

Tyr-37 is a binding site for L-tyrosine. The 'HIGH' region motif lies at 42–51 (PTADSLHLGH). Residues Tyr-175 and Gln-179 each coordinate L-tyrosine. A 'KMSKS' region motif is present at residues 235-239 (KFGKT). An ATP-binding site is contributed by Lys-238. Positions 357–414 (ADLQQALVSAELVPSRGQARTMISSNAVTINGEKQANPEYIFSASDRLFDRYTLLRRG) constitute an S4 RNA-binding domain.

This sequence belongs to the class-I aminoacyl-tRNA synthetase family. TyrS type 1 subfamily. In terms of assembly, homodimer.

Its subcellular location is the cytoplasm. It catalyses the reaction tRNA(Tyr) + L-tyrosine + ATP = L-tyrosyl-tRNA(Tyr) + AMP + diphosphate + H(+). Catalyzes the attachment of tyrosine to tRNA(Tyr) in a two-step reaction: tyrosine is first activated by ATP to form Tyr-AMP and then transferred to the acceptor end of tRNA(Tyr). In Pectobacterium atrosepticum (strain SCRI 1043 / ATCC BAA-672) (Erwinia carotovora subsp. atroseptica), this protein is Tyrosine--tRNA ligase.